A 39-amino-acid polypeptide reads, in one-letter code: Cytochrome b559 subunit beta (39 aa).

Residues 14-30 (WLAVHGLAVPTVSFLGS) form a helical membrane-spanning segment. Histidine 18 is a binding site for heme.

It belongs to the PsbE/PsbF family. As to quaternary structure, heterodimer of an alpha subunit and a beta subunit. PSII is composed of 1 copy each of membrane proteins PsbA, PsbB, PsbC, PsbD, PsbE, PsbF, PsbH, PsbI, PsbJ, PsbK, PsbL, PsbM, PsbT, PsbX, PsbY, PsbZ, Psb30/Ycf12, at least 3 peripheral proteins of the oxygen-evolving complex and a large number of cofactors. It forms dimeric complexes. Heme b serves as cofactor.

The protein resides in the plastid. It is found in the chloroplast thylakoid membrane. Its function is as follows. This b-type cytochrome is tightly associated with the reaction center of photosystem II (PSII). PSII is a light-driven water:plastoquinone oxidoreductase that uses light energy to abstract electrons from H(2)O, generating O(2) and a proton gradient subsequently used for ATP formation. It consists of a core antenna complex that captures photons, and an electron transfer chain that converts photonic excitation into a charge separation. This chain is Cytochrome b559 subunit beta, found in Muilla maritima (Sea muilla).